A 331-amino-acid polypeptide reads, in one-letter code: Leucine-rich repeat-containing protein 26 (331 aa).

Positions 1–26 are cleaved as a signal peptide; that stretch reads MRGSFFSRLPPQLSLLLLLSLRRVWT. Residues 27 to 261 are Extracellular-facing; sequence QEDIGTAPSK…QCTQSLAARD (235 aa). Residues 34–71 enclose the LRRNT domain; it reads PSKSPVAPECPEACSCSLGGKANCSALALPAVPADLSW. 2 disulfide bridges follow: Cys-43–Cys-49 and Cys-47–Cys-57. LRR repeat units follow at residues 72 to 93, 96 to 117, 120 to 141, 144 to 165, and 168 to 191; these read QVRS…AFAN, ALLY…AFWG, VLQW…TFAP, ALSF…ILGP, and LLRV…NNLP. Positions 201–255 constitute an LRRCT domain; that stretch reads NPWTCNCALRPLCTWLRKHPRPASETETLLCVSPRLQTLSLLTAFPDAAFKQCTQ. Cystine bridges form between Cys-205–Cys-231 and Cys-207–Cys-253. The chain crosses the membrane as a helical span at residues 262 to 282; sequence LAVVYALGPVSFLASLAICLA. The Cytoplasmic segment spans residues 283 to 331; sequence LGSVLTACGARRRRRRRTTVRHLLRRQLDPEGPPSLEDAGSPVTAAIQA. The tract at residues 310–331 is disordered; sequence LDPEGPPSLEDAGSPVTAAIQA.

In terms of assembly, interacts with KCNMA1.

It is found in the cell membrane. The protein localises to the cytoplasm. Its subcellular location is the cytoskeleton. Functionally, auxiliary protein of the large-conductance, voltage and calcium-activated potassium channel (BK alpha). Required for the conversion of BK alpha channels from a high-voltage to a low-voltage activated channel type in non-excitable cells. These are characterized by negative membrane voltages and constant low levels of calcium. In Mus musculus (Mouse), this protein is Leucine-rich repeat-containing protein 26 (Lrrc26).